The sequence spans 104 residues: Thioredoxin (104 aa).

Positions 2 to 104 constitute a Thioredoxin domain; it reads AIVKVTDSNF…NLAEVLDKHL (103 aa). Cysteines 29 and 32 form a disulfide.

It belongs to the thioredoxin family.

Its function is as follows. Component of the thioredoxin-thioredoxin reductase system. Participates in various redox reactions through the reversible oxidation of its active center dithiol to a disulfide and catalyzes dithiol-disulfide exchange reactions. In Staphylococcus haemolyticus (strain JCSC1435), this protein is Thioredoxin (trxA).